A 245-amino-acid polypeptide reads, in one-letter code: Phosducin (245 aa).

The tract at residues 1-67 (MEEARRQSLE…SRDDKDSKER (67 aa)) is disordered. Residues 1–241 (MEEARRQSLE…IHALEQTSME (241 aa)) enclose the Phosducin domain. Basic and acidic residues predominate over residues 58–67 (SRDDKDSKER). Position 73 is a phosphoserine; by PKA (Ser-73). The tract at residues 111–245 (YGFVYELETG…EQTSMEEDVE (135 aa)) is thioredoxin fold.

The protein belongs to the phosducin family. In terms of assembly, forms a complex with the beta and gamma subunits of the GTP-binding protein, transducin. Interacts with CRX. Post-translationally, light-induced changes in cyclic nucleotide levels modulate the phosphorylation of this protein by cAMP kinase.

It is found in the cytoplasm. The protein resides in the cytosol. Its subcellular location is the nucleus. The protein localises to the cell projection. It localises to the cilium. It is found in the photoreceptor outer segment. The protein resides in the photoreceptor inner segment. Functionally, may participate in the regulation of visual phototransduction or in the integration of photoreceptor metabolism. Inhibits the transcriptional activation activity of the cone-rod homeobox CRX. The polypeptide is Phosducin (PDC) (Equus caballus (Horse)).